Here is a 190-residue protein sequence, read N- to C-terminus: Glutamyl-tRNA(Gln) amidotransferase subunit C, mitochondrial (190 aa).

Residues M1–F96 constitute a mitochondrion transit peptide. The tract at residues K28–S57 is disordered.

Belongs to the GatC family. In terms of assembly, subunit of the heterotrimeric GatCAB amidotransferase (AdT) complex, composed of A, B and C subunits.

Its subcellular location is the mitochondrion. It carries out the reaction L-glutamyl-tRNA(Gln) + L-glutamine + ATP + H2O = L-glutaminyl-tRNA(Gln) + L-glutamate + ADP + phosphate + H(+). Functionally, allows the formation of correctly charged Gln-tRNA(Gln) through the transamidation of misacylated Glu-tRNA(Gln) in the mitochondria. The reaction takes place in the presence of glutamine and ATP through an activated gamma-phospho-Glu-tRNA(Gln). This is Glutamyl-tRNA(Gln) amidotransferase subunit C, mitochondrial from Loa loa (Eye worm).